The primary structure comprises 494 residues: UPF0371 protein stu1377 (494 aa).

It belongs to the UPF0371 family.

The chain is UPF0371 protein stu1377 from Streptococcus thermophilus (strain ATCC BAA-250 / LMG 18311).